The chain runs to 81 residues: MSGSTGERPFSDIVTSIRYWVIHSITIPMLFIAGWLFVSTGLAYDVFGTPRPDQYFTQERQELPIISDRYKASQQIQEFNK.

The chain crosses the membrane as a helical span at residues 21 to 35 (VIHSITIPMLFIAGW). Position 23 (histidine 23) interacts with heme.

It belongs to the PsbE/PsbF family. Heterodimer of an alpha subunit and a beta subunit. PSII is composed of 1 copy each of membrane proteins PsbA, PsbB, PsbC, PsbD, PsbE, PsbF, PsbH, PsbI, PsbJ, PsbK, PsbL, PsbM, PsbT, PsbX, PsbY, PsbZ, Psb30/Ycf12, peripheral proteins PsbO, CyanoQ (PsbQ), PsbU, PsbV and a large number of cofactors. It forms dimeric complexes. The cofactor is heme b.

Its subcellular location is the cellular thylakoid membrane. This b-type cytochrome is tightly associated with the reaction center of photosystem II (PSII). PSII is a light-driven water:plastoquinone oxidoreductase that uses light energy to abstract electrons from H(2)O, generating O(2) and a proton gradient subsequently used for ATP formation. It consists of a core antenna complex that captures photons, and an electron transfer chain that converts photonic excitation into a charge separation. The protein is Cytochrome b559 subunit alpha of Rippkaea orientalis (strain PCC 8801 / RF-1) (Cyanothece sp. (strain PCC 8801)).